The primary structure comprises 391 residues: Large envelope protein (391 aa).

Met1 bears the N-acetylmethionine mark. Residue Gly2 is the site of N-myristoyl glycine; by host attachment. The interval 2–108 is pre-S1; the sequence is GLNQSTFNPL…PPLRDTHPQA (107 aa). The interval 2 to 163 is pre-S; the sequence is GLNQSTFNPL…FSTTGVPVST (162 aa). The Virion surface; in external conformation portion of the chain corresponds to 2–170; it reads GLNQSTFNPL…VSTMDITSSG (169 aa). At 2-242 the chain is on the intravirion; in internal conformation side; it reads GLNQSTFNPL…PGYRWMCLRR (241 aa). The disordered stretch occupies residues 73 to 107; the sequence is LSVTVPDTPPPPSTNRDKGRKPTPATPPLRDTHPQ. The segment at 109–163 is pre-S2; the sequence is MTWNTSSFQSYLQNPKVRGLYFPAGGSTSSIVNPVPTTASTTSSSFSTTGVPVST. The chain crosses the membrane as a helical span at residues 171 to 191; sequence FLGPLLALQAVFFLLTKILTM. At 192 to 242 the chain is on the intravirion; in external conformation side; the sequence is PQSLDSLWTSLNFLGGTPACPGLNSQSPTSSHSPTCCPPTCPGYRWMCLRR. The chain crosses the membrane as a helical span at residues 243 to 263; the sequence is SIIFLFILLLCLIFLLVLLDY. At 264–339 the chain is on the virion surface side; sequence QGMLPVCPLL…WALARFSWLN (76 aa). N-linked (GlcNAc...) asparagine; by host glycosylation is present at Asn311. The chain crosses the membrane as a helical span at residues 340 to 360; sequence SLLPFVQWFAGLSPTVWLLVI. The Intravirion segment spans residues 361–366; sequence WMMWFW. The helical transmembrane segment at 367–389 threads the bilayer; it reads GPSLFSILSPFLPLLPLFFWLWA. Over 390–391 the chain is Virion surface; it reads YI.

It belongs to the orthohepadnavirus major surface antigen family. As to quaternary structure, in its internal form (Li-HBsAg), interacts with the capsid protein and with the isoform S. Interacts with host chaperone CANX. In terms of assembly, associates with host chaperone CANX through its pre-S2 N glycan; this association may be essential for isoform M proper secretion. Interacts with isoform L. Interacts with the antigens of satellite virus HDV (HDVAgs); this interaction is required for encapsidation of HDV genomic RNA. In terms of processing, isoform M is N-terminally acetylated by host at a ratio of 90%, and N-glycosylated by host at the pre-S2 region. Post-translationally, myristoylated.

The protein resides in the virion membrane. Functionally, the large envelope protein exists in two topological conformations, one which is termed 'external' or Le-HBsAg and the other 'internal' or Li-HBsAg. In its external conformation the protein attaches the virus to cell receptors and thereby initiating infection. This interaction determines the species specificity and liver tropism. This attachment induces virion internalization predominantly through caveolin-mediated endocytosis. The large envelope protein also assures fusion between virion membrane and endosomal membrane. In its internal conformation the protein plays a role in virion morphogenesis and mediates the contact with the nucleocapsid like a matrix protein. In terms of biological role, the middle envelope protein plays an important role in the budding of the virion. It is involved in the induction of budding in a nucleocapsid independent way. In this process the majority of envelope proteins bud to form subviral lipoprotein particles of 22 nm of diameter that do not contain a nucleocapsid. This Woolly monkey hepatitis B virus (isolate Louisville) (WMHBV) protein is Large envelope protein.